A 1408-amino-acid chain; its full sequence is DNA-directed RNA polymerase subunit beta (1408 aa).

The segment at 1383-1408 (PERQRSFGGDFLGGGDGEERKTGTEA) is disordered. A compositionally biased stretch (basic and acidic residues) spans 1399 to 1408 (GEERKTGTEA).

It belongs to the RNA polymerase beta chain family. In terms of assembly, the RNAP catalytic core consists of 2 alpha, 1 beta, 1 beta' and 1 omega subunit. When a sigma factor is associated with the core the holoenzyme is formed, which can initiate transcription.

It carries out the reaction RNA(n) + a ribonucleoside 5'-triphosphate = RNA(n+1) + diphosphate. In terms of biological role, DNA-dependent RNA polymerase catalyzes the transcription of DNA into RNA using the four ribonucleoside triphosphates as substrates. This Myxococcus xanthus (strain DK1622) protein is DNA-directed RNA polymerase subunit beta.